Here is a 98-residue protein sequence, read N- to C-terminus: MVLAMLGALHPRAGLSLFLHLILAVALLRSQPLRSQRSVPEAFSAPLELSQPLSGLVDDYGILPKHPRPRGPRPLLSRAQQRKRDGPDLAEYYYDAHL.

Residues 13–29 (AGLSLFLHLILAVALLR) form a helical membrane-spanning segment. Residues 60–87 (YGILPKHPRPRGPRPLLSRAQQRKRDGP) are disordered.

As to quaternary structure, interacts with SPPL2C (via active sites); the interaction stabilizes FREY1 protein and inhibits SPPL2C proteolytic activity. Interacts with IZUMO1; the interaction retains IZUMO1 at the endoplasmic reticulum membrane and coordinates IZUMO1 complex assembly.

Its subcellular location is the endoplasmic reticulum membrane. In terms of biological role, key regulator for male fertility expressed transiently in round spermatids where it recruits IZUMO1 at the endoplasmic reticulum (ER) membrane and coordinates the oolemmal binding multimeric complex (IZUMO1 complex) assembly. Upon complete assembly of the IZUMO1 complex, its ER retention is released, facilitating IZUMO1 complex export to the acrosome. Through the interaction with SPPL2C, inhibits its intramembrane protease activity directly accessing the catalytic center of an I-CLiP. The chain is Protein Frey 1 from Homo sapiens (Human).